The chain runs to 134 residues: Isocitrate dehydrogenase [NAD] subunit alpha, mitochondrial (134 aa).

K37 carries the post-translational modification N6-succinyllysine. Phosphothreonine is present on T50. The substrate site is built by R64, R74, and R95.

This sequence belongs to the isocitrate and isopropylmalate dehydrogenases family. In terms of assembly, heterooligomer of subunits alpha (IDH3A), beta (IDH3B), and gamma (IDH3G) in the apparent ratio of 2:1:1. The heterodimer containing one IDH3A and one IDH3B subunit and the heterodimer containing one IDH3A and one IDH3G subunit assemble into a heterotetramer (which contains two subunits of IDH3A, one of IDH3B and one of IDH3G) and further into the heterooctamer. Mg(2+) is required as a cofactor. The cofactor is Mn(2+).

It localises to the mitochondrion. The enzyme catalyses D-threo-isocitrate + NAD(+) = 2-oxoglutarate + CO2 + NADH. The heterotetramer and the heterodimer composed of IDH3A and IDH3G subunits can be allosterically activated by citrate (CIT) or/and ADP, and the two activators can act independently or synergistically. The heterodimer composed of IDH3A and IDH3B subunits cannot be allosterically regulated and the allosteric regulation of the heterotetramer is through the IDH3G subunit and not the IDH3B subunit. The IDH3G subunit contains the allosteric site which consists of a CIT-binding site and an ADP-binding site, and the binding of CIT and ADP causes conformational changes at the allosteric site which are transmitted to the active site in the catalytic subunit (IDH3A) through a cascade of conformational changes at the heterodimer interface, leading to stabilization of the isocitrate-binding at the active site and thus activation of the enzyme. ATP can activate the heterotetramer and the heterodimer composed of IDH3A and IDH3G subunits at low concentrations but inhibits their activities at high concentrations, whereas ATP exhibits only inhibitory effect on the heterodimer composed of IDH3A and IDH3B subunits. Functionally, catalytic subunit of the enzyme which catalyzes the decarboxylation of isocitrate (ICT) into alpha-ketoglutarate. The heterodimer composed of the alpha (IDH3A) and beta (IDH3B) subunits and the heterodimer composed of the alpha (IDH3A) and gamma (IDH3G) subunits, have considerable basal activity but the full activity of the heterotetramer (containing two subunits of IDH3A, one of IDH3B and one of IDH3G) requires the assembly and cooperative function of both heterodimers. The protein is Isocitrate dehydrogenase [NAD] subunit alpha, mitochondrial of Mesocricetus auratus (Golden hamster).